The primary structure comprises 186 residues: Large ribosomal subunit protein uL5 (186 aa).

This sequence belongs to the universal ribosomal protein uL5 family. As to quaternary structure, part of the 50S ribosomal subunit; part of the 5S rRNA/L5/L18/L25 subcomplex. Contacts the 5S rRNA and the P site tRNA. Forms a bridge to the 30S subunit in the 70S ribosome.

This is one of the proteins that bind and probably mediate the attachment of the 5S RNA into the large ribosomal subunit, where it forms part of the central protuberance. In the 70S ribosome it contacts protein S13 of the 30S subunit (bridge B1b), connecting the 2 subunits; this bridge is implicated in subunit movement. Contacts the P site tRNA; the 5S rRNA and some of its associated proteins might help stabilize positioning of ribosome-bound tRNAs. The polypeptide is Large ribosomal subunit protein uL5 (Cereibacter sphaeroides (strain ATCC 17023 / DSM 158 / JCM 6121 / CCUG 31486 / LMG 2827 / NBRC 12203 / NCIMB 8253 / ATH 2.4.1.) (Rhodobacter sphaeroides)).